We begin with the raw amino-acid sequence, 338 residues long: 3-phosphoshikimate 1-carboxyvinyltransferase 2 (338 aa).

R25 lines the phosphoenolpyruvate pocket. Residues S72, S73, Q74, S100, D225, and K252 each coordinate 3-phosphoshikimate. Q74 provides a ligand contact to phosphoenolpyruvate. Catalysis depends on D225, which acts as the Proton acceptor. Residues R256, R298, and K323 each contribute to the phosphoenolpyruvate site.

This sequence belongs to the EPSP synthase family.

It localises to the plastid. The protein localises to the chloroplast. It carries out the reaction 3-phosphoshikimate + phosphoenolpyruvate = 5-O-(1-carboxyvinyl)-3-phosphoshikimate + phosphate. The protein operates within metabolic intermediate biosynthesis; chorismate biosynthesis; chorismate from D-erythrose 4-phosphate and phosphoenolpyruvate: step 6/7. Its function is as follows. Catalyzes the transfer of the enolpyruvyl moiety of phosphoenolpyruvate (PEP) to the 5-hydroxyl of shikimate-3-phosphate (S3P) to produce enolpyruvyl shikimate-3-phosphate and inorganic phosphate. The protein is 3-phosphoshikimate 1-carboxyvinyltransferase 2 (EPSPS-2) of Nicotiana tabacum (Common tobacco).